The following is a 258-amino-acid chain: Eukaryotic translation initiation factor 3 subunit J (258 aa).

Low complexity predominate over residues 1-11 (MAAAAAAAGDS). Positions 1-108 (MAAAAAAAGD…LEEPEEPKVL (108 aa)) are disordered. The residue at position 2 (alanine 2) is an N-acetylalanine. The interval 2–69 (AAAAAAAGDS…KEEAEVKPEV (68 aa)) is sufficient for interaction with EIF3B. 3 positions are modified to phosphoserine: serine 11, serine 13, and serine 20. Over residues 40 to 59 (EGEDEDEDVKDNWDDDDDEK) the composition is skewed to acidic residues. A compositionally biased stretch (basic and acidic residues) spans 60–106 (KEEAEVKPEVKISEKKKIAEKIKEKERQQKKRQEEIKKRLEEPEEPK). Positions 70 to 135 (KISEKKKIAE…ESDLELAKET (66 aa)) form a coiled coil. Residue lysine 106 forms a Glycyl lysine isopeptide (Lys-Gly) (interchain with G-Cter in SUMO2) linkage. A Phosphothreonine modification is found at threonine 109. Serine 127 is subject to Phosphoserine. Residues 217–238 (SKAKKKKKGVVPGGGLKATMKD) form a disordered region. The promotes stable association with the 40S ribosome stretch occupies residues 243-258 (YGGYDGGYVQDYEDFM). The residue at position 254 (tyrosine 254) is a Phosphotyrosine.

Component of the eukaryotic translation initiation factor 3 (eIF-3) complex, which is composed of 13 subunits: EIF3A, EIF3B, EIF3C, EIF3D, EIF3E, EIF3F, EIF3G, EIF3H, EIF3I, EIF3J, EIF3K, EIF3L and EIF3M. The eIF-3 complex appears to include 3 stable modules: module A is composed of EIF3A, EIF3B, EIF3G and EIF3I; module B is composed of EIF3F, EIF3H, and EIF3M; and module C is composed of EIF3C, EIF3D, EIF3E, EIF3K and EIF3L. EIF3C of module C binds EIF3B of module A and EIF3H of module B, thereby linking the three modules. EIF3J is a labile subunit that binds to the eIF-3 complex via EIF3B. The eIF-3 complex interacts with RPS6KB1 under conditions of nutrient depletion. Mitogenic stimulation leads to binding and activation of a complex composed of MTOR and RPTOR, leading to phosphorylation and release of RPS6KB1 and binding of EIF4B to eIF-3. Phosphorylated. Phosphorylation is enhanced upon serum stimulation.

Its subcellular location is the cytoplasm. Component of the eukaryotic translation initiation factor 3 (eIF-3) complex, which is required for several steps in the initiation of protein synthesis. The eIF-3 complex associates with the 40S ribosome and facilitates the recruitment of eIF-1, eIF-1A, eIF-2:GTP:methionyl-tRNAi and eIF-5 to form the 43S pre-initiation complex (43S PIC). The eIF-3 complex stimulates mRNA recruitment to the 43S PIC and scanning of the mRNA for AUG recognition. The eIF-3 complex is also required for disassembly and recycling of post-termination ribosomal complexes and subsequently prevents premature joining of the 40S and 60S ribosomal subunits prior to initiation. The eIF-3 complex specifically targets and initiates translation of a subset of mRNAs involved in cell proliferation, including cell cycling, differentiation and apoptosis, and uses different modes of RNA stem-loop binding to exert either translational activation or repression. This is Eukaryotic translation initiation factor 3 subunit J from Homo sapiens (Human).